A 214-amino-acid polypeptide reads, in one-letter code: CASP-like protein 3A1 (214 aa).

Residues M1–H49 are Cytoplasmic-facing. The helical transmembrane segment at V50–A70 threads the bilayer. At H71–E96 the chain is on the extracellular side. A helical transmembrane segment spans residues Y97–M117. At S118 to H132 the chain is on the cytoplasmic side. The helical transmembrane segment at A133–A153 threads the bilayer. Topologically, residues A154 to N182 are extracellular. N161 is a glycosylation site (N-linked (GlcNAc...) asparagine). Residues H183–V203 form a helical membrane-spanning segment. Topologically, residues Q204 to Y214 are cytoplasmic.

Belongs to the Casparian strip membrane proteins (CASP) family. In terms of assembly, homodimer and heterodimers.

The protein localises to the cell membrane. This Ricinus communis (Castor bean) protein is CASP-like protein 3A1.